A 535-amino-acid polypeptide reads, in one-letter code: Phosphoenolpyruvate carboxykinase (ATP) (535 aa).

Positions 59, 201, and 207 each coordinate substrate. ATP is bound by residues lysine 207, histidine 226, and 243–251 (GLSGTGKTT). The Mn(2+) site is built by lysine 207 and histidine 226. Aspartate 264 contributes to the Mn(2+) binding site. Residues glutamate 292, arginine 328, 444–445 (RI), and threonine 450 each bind ATP. Substrate is bound at residue arginine 328.

This sequence belongs to the phosphoenolpyruvate carboxykinase (ATP) family. Mn(2+) serves as cofactor.

The protein resides in the cytoplasm. It carries out the reaction oxaloacetate + ATP = phosphoenolpyruvate + ADP + CO2. It participates in carbohydrate biosynthesis; gluconeogenesis. Functionally, involved in the gluconeogenesis. Catalyzes the conversion of oxaloacetate (OAA) to phosphoenolpyruvate (PEP) through direct phosphoryl transfer between the nucleoside triphosphate and OAA. The chain is Phosphoenolpyruvate carboxykinase (ATP) from Bacteroides thetaiotaomicron (strain ATCC 29148 / DSM 2079 / JCM 5827 / CCUG 10774 / NCTC 10582 / VPI-5482 / E50).